The sequence spans 246 residues: Polyhedrin (246 aa).

This sequence belongs to the polyhedrin family.

Functionally, major component of the virus occlusion bodies, which are large proteinaceous structures (polyhedra), that protect the virus from the outside environment for extended periods until they are ingested by insect larvae. This chain is Polyhedrin (PH), found in Heliothis zea nuclear polyhedrosis virus (HzSNPV).